The following is a 105-amino-acid chain: MKLMYKIAVIGDKDSVLAFKILGVDVFITLDAQEARKTIDRIAKENYGIIFVTEQLAKDIPETIKRYNSEIIPAVILIPSNKGSLNIGLTNIDKNVEKAIGSKIM.

It belongs to the V-ATPase F subunit family.

In terms of biological role, produces ATP from ADP in the presence of a proton gradient across the membrane. In Fusobacterium nucleatum subsp. nucleatum (strain ATCC 25586 / DSM 15643 / BCRC 10681 / CIP 101130 / JCM 8532 / KCTC 2640 / LMG 13131 / VPI 4355), this protein is V-type ATP synthase subunit F.